A 375-amino-acid polypeptide reads, in one-letter code: Patatin-1-Kuras 2 (375 aa).

The signal sequence occupies residues 1-11 (MILATTSSTFA). The PNPLA domain occupies 20 to 218 (LSIDGGGIKG…TVADPALLSV (199 aa)). A GXGXXG motif is present at residues 24–29 (GGGIKG). Positions 63–67 (GTSTG) match the GXSXG motif. Ser65 functions as the Nucleophile in the catalytic mechanism. Asn103 carries N-linked (GlcNAc...) asparagine glycosylation. Catalysis depends on Asp204, which acts as the Proton acceptor. The DGA/G signature appears at 204–206 (DGA). Residues 349–373 (ETYEEALKRFAKLLSDRKKLRANKA) are a coiled coil.

It belongs to the patatin family. As to expression, tuber.

The protein localises to the vacuole. Probable lipolytic acyl hydrolase (LAH), an activity which is thought to be involved in the response of tubers to pathogens. The sequence is that of Patatin-1-Kuras 2 (pat1-k2) from Solanum tuberosum (Potato).